The following is a 268-amino-acid chain: Tryptophan synthase alpha chain (268 aa).

Residues Glu49 and Asp60 each act as proton acceptor in the active site.

The protein belongs to the TrpA family. In terms of assembly, tetramer of two alpha and two beta chains.

The catalysed reaction is (1S,2R)-1-C-(indol-3-yl)glycerol 3-phosphate + L-serine = D-glyceraldehyde 3-phosphate + L-tryptophan + H2O. It participates in amino-acid biosynthesis; L-tryptophan biosynthesis; L-tryptophan from chorismate: step 5/5. Functionally, the alpha subunit is responsible for the aldol cleavage of indoleglycerol phosphate to indole and glyceraldehyde 3-phosphate. The protein is Tryptophan synthase alpha chain of Haemophilus influenzae (strain 86-028NP).